A 113-amino-acid polypeptide reads, in one-letter code: UPF0145 protein MTH_544 (113 aa).

The protein belongs to the UPF0145 family.

The sequence is that of UPF0145 protein MTH_544 from Methanothermobacter thermautotrophicus (strain ATCC 29096 / DSM 1053 / JCM 10044 / NBRC 100330 / Delta H) (Methanobacterium thermoautotrophicum).